Consider the following 454-residue polypeptide: Histidine--tRNA ligase (454 aa).

The disordered stretch occupies residues 434–454 (ADAGAWNPPTEDLHPGVIGTW).

The protein belongs to the class-II aminoacyl-tRNA synthetase family. As to quaternary structure, homodimer.

Its subcellular location is the cytoplasm. It carries out the reaction tRNA(His) + L-histidine + ATP = L-histidyl-tRNA(His) + AMP + diphosphate + H(+). This is Histidine--tRNA ligase (hisS) from Cutibacterium acnes (strain DSM 16379 / KPA171202) (Propionibacterium acnes).